The following is a 486-amino-acid chain: ATP-dependent rRNA helicase RRP3 (486 aa).

A disordered region spans residues 1–58 (MNGAKRRKVAQDTPRNTKPVAQEKPARAEPKPSSDEESEEESATLEEPSAEETAVDAP). Basic and acidic residues predominate over residues 24–34 (KPARAEPKPSS). Over residues 35-54 (DEESEEESATLEEPSAEETA) the composition is skewed to acidic residues. The Q motif motif lies at 60 to 88 (KTFKDLGVNDALCEACEKLNYKYPTPIQE). Positions 91-262 (IPVALQGRDI…RASLRDPVKV (172 aa)) constitute a Helicase ATP-binding domain. Residue 104-111 (AETGSGKT) participates in ATP binding. Positions 210–213 (DEAD) match the DEAD box motif. One can recognise a Helicase C-terminal domain in the interval 286–434 (QKDVHLIYLI…EYPTEKEEVM (149 aa)). 2 stretches are compositionally biased toward basic and acidic residues: residues 451–460 (MKSFTEERGK) and 476–486 (RGRDDMDREEG). The disordered stretch occupies residues 451–486 (MKSFTEERGKKGSTLKGGRGKKGGKRGRDDMDREEG).

Belongs to the DEAD box helicase family. DDX47/RRP3 subfamily. As to quaternary structure, interacts with the SSU processome.

The protein localises to the nucleus. It carries out the reaction ATP + H2O = ADP + phosphate + H(+). Its function is as follows. ATP-dependent rRNA helicase required for pre-ribosomal RNA processing. Involved in the maturation of the 35S-pre-rRNA and to its cleavage to mature 18S rRNA. The polypeptide is ATP-dependent rRNA helicase RRP3 (Gibberella zeae (strain ATCC MYA-4620 / CBS 123657 / FGSC 9075 / NRRL 31084 / PH-1) (Wheat head blight fungus)).